Here is a 509-residue protein sequence, read N- to C-terminus: Steroid 17-alpha-hydroxylase/17,20 lyase (509 aa).

Residue N202 participates in substrate binding. C442 serves as a coordination point for heme.

This sequence belongs to the cytochrome P450 family. It depends on heme as a cofactor.

Its subcellular location is the endoplasmic reticulum membrane. It localises to the microsome membrane. It catalyses the reaction a C21-steroid + reduced [NADPH--hemoprotein reductase] + O2 = a 17alpha-hydroxy-C21-steroid + oxidized [NADPH--hemoprotein reductase] + H2O + H(+). The catalysed reaction is progesterone + reduced [NADPH--hemoprotein reductase] + O2 = 17alpha-hydroxyprogesterone + oxidized [NADPH--hemoprotein reductase] + H2O + H(+). The enzyme catalyses pregnenolone + reduced [NADPH--hemoprotein reductase] + O2 = 17alpha-hydroxypregnenolone + oxidized [NADPH--hemoprotein reductase] + H2O + H(+). It carries out the reaction 17alpha-hydroxyprogesterone + reduced [NADPH--hemoprotein reductase] + O2 = androst-4-ene-3,17-dione + acetate + oxidized [NADPH--hemoprotein reductase] + H2O + 2 H(+). It catalyses the reaction 17alpha-hydroxyprogesterone + reduced [NADPH--hemoprotein reductase] + O2 = 16alpha,17alpha-dihydroxyprogesterone + oxidized [NADPH--hemoprotein reductase] + H2O + H(+). The catalysed reaction is 16alpha,17alpha-dihydroxyprogesterone + reduced [NADPH--hemoprotein reductase] + O2 = 6beta,16alpha,17alpha-trihydroxyprogesterone + oxidized [NADPH--hemoprotein reductase] + H2O + H(+). The enzyme catalyses 17alpha-hydroxypregnenolone + reduced [NADPH--hemoprotein reductase] + O2 = 3beta-hydroxyandrost-5-en-17-one + acetate + oxidized [NADPH--hemoprotein reductase] + H2O + 2 H(+). It carries out the reaction 16alpha,17alpha-dihydroxypregnenolone + reduced [NADPH--hemoprotein reductase] + O2 = 3beta,16alpha-dihydroxy-androst-5-en-17-one + acetate + oxidized [NADPH--hemoprotein reductase] + H2O + 2 H(+). It catalyses the reaction 3beta-hydroxyandrost-5-en-17-one + reduced [NADPH--hemoprotein reductase] + O2 = 3beta,16alpha-dihydroxy-androst-5-en-17-one + oxidized [NADPH--hemoprotein reductase] + H2O + H(+). The catalysed reaction is androst-4-ene-3,17-dione + reduced [NADPH--hemoprotein reductase] + O2 = 16alpha-hydroxyandrost-4-ene-3,17-dione + oxidized [NADPH--hemoprotein reductase] + H2O + H(+). The protein operates within steroid hormone biosynthesis. It functions in the pathway steroid biosynthesis; glucocorticoid biosynthesis. Its activity is regulated as follows. Regulated predominantly by intracellular cAMP levels. The 17,20-lyase activity is stimulated by cytochrome b5, which acts as an allosteric effector increasing the Vmax of the lyase activity. Functionally, a cytochrome P450 monooxygenase involved in corticoid and androgen biosynthesis. Catalyzes 17-alpha hydroxylation of C21 steroids, which is common for both pathways. A second oxidative step, required only for androgen synthesis, involves an acyl-carbon cleavage. The 17-alpha hydroxy intermediates, as part of adrenal glucocorticoids biosynthesis pathway, are precursors of cortisol. Hydroxylates steroid hormones, pregnenolone and progesterone to form 17-alpha hydroxy metabolites, followed by the cleavage of the C17-C20 bond to form C19 steroids, dehydroepiandrosterone (DHEA) and androstenedione. Has 16-alpha hydroxylase activity. Catalyzes 16-alpha hydroxylation of 17-alpha hydroxy pregnenolone, followed by the cleavage of the C17-C20 bond to form 16-alpha-hydroxy DHEA. Also 16-alpha hydroxylates androgens, relevant for estriol synthesis. Mechanistically, uses molecular oxygen inserting one oxygen atom into a substrate, and reducing the second into a water molecule, with two electrons provided by NADPH via cytochrome P450 reductase (CPR; NADPH-ferrihemoprotein reductase). The polypeptide is Steroid 17-alpha-hydroxylase/17,20 lyase (CYP17A1) (Capra hircus (Goat)).